The sequence spans 339 residues: Cilia- and flagella-associated protein 36 (339 aa).

Coiled-coil stretches lie at residues 142–188 and 255–330; these read ISDL…ENKQ and NLSQ…EVIL. Disordered regions lie at residues 177–212 and 281–318; these read NLTL…EKQP and KKQE…QRRK. Positions 187-200 are enriched in polar residues; that stretch reads KQSSGSERTPNNTE. The segment covering 281–313 has biased composition (basic and acidic residues); the sequence is KKQESKKMAQNSEEHEEKATCSKQEMTEEEKKS.

The protein belongs to the CFAP36 family.

The protein localises to the nucleus. It localises to the cytoplasm. Its subcellular location is the cell projection. It is found in the cilium. The protein resides in the flagellum. The chain is Cilia- and flagella-associated protein 36 from Xenopus tropicalis (Western clawed frog).